Reading from the N-terminus, the 492-residue chain is NADH-quinone oxidoreductase subunit N (492 aa).

14 helical membrane-spanning segments follow: residues 18–38, 45–65, 80–100, 108–128, 133–153, 167–187, 209–229, 250–270, 277–297, 305–325, 333–353, 381–401, 415–435, and 464–484; these read ILPMLVLVCGGIFTLLINAFT, LNMFLCMLFLVLDFLVVLGLE, LSLVSQSIVLISAFLLIFLAL, FQTAEFYPLYLFIIAGFQFMV, LLLMLIGLETASLPICVLMAL, FTMGAMASAFFAMGAMAFYLL, MLFAMGVIFLIGAIGFKVSLV, ISIVPKIAGFVVATRLFGAFI, VEDIFYALILITITIPNLIAL, MLAYSSISHSGFALACVFIHT, FVYWFMFAFTYIGAFGLLWLL, VAILGAIFVFGLAGIPPFSVF, NHILLAAVMLANSAVAVFYYF, and MPIYAVIIAMALVCLFSVFMM.

This sequence belongs to the complex I subunit 2 family. NDH-1 is composed of 14 different subunits. Subunits NuoA, H, J, K, L, M, N constitute the membrane sector of the complex.

It localises to the cell inner membrane. It catalyses the reaction a quinone + NADH + 5 H(+)(in) = a quinol + NAD(+) + 4 H(+)(out). Its function is as follows. NDH-1 shuttles electrons from NADH, via FMN and iron-sulfur (Fe-S) centers, to quinones in the respiratory chain. The immediate electron acceptor for the enzyme in this species is believed to be ubiquinone. Couples the redox reaction to proton translocation (for every two electrons transferred, four hydrogen ions are translocated across the cytoplasmic membrane), and thus conserves the redox energy in a proton gradient. The polypeptide is NADH-quinone oxidoreductase subunit N (Helicobacter acinonychis (strain Sheeba)).